Here is a 315-residue protein sequence, read N- to C-terminus: MVGWAIALHGGAGDIPIDLPDERRIPRESALRHCLDLGISALKSGKPPLDVAELVVRELENHPDFNAGKGSVLTAQGTVEMEASIMDGKTKRCGAVSGLTTVVNPISLARLVMEKTPHIYLAFDAAEAFARAHGVETVDSSHFITPENIARLKQAKEFNRVQLDYTVPSPKVPDNCGDSQIGTVGCVAVDSAGNLASATSTGGYVNKMVGRIGDTPVIGAGTYANHLCAISATGKGEDIIRGTVARDVAALMEYKGLSLTEAAAYVVDQSVPRGSCGLVAVSANGEVTMPFNTTGMFRACASEDGYSEIAIWPNN.

Phosphoserine is present on Ser-169. Catalysis depends on Thr-183, which acts as the Nucleophile. Substrate-binding positions include 211-214 (RIGD) and 233-236 (TGKG).

It belongs to the Ntn-hydrolase family. Heterotetramer of two alpha and two beta chains arranged as a dimer of alpha/beta heterodimers. Cleaved into an alpha and beta chain by autocatalysis; this activates the enzyme. The N-terminal residue of the beta subunit is responsible for the nucleophile hydrolase activity.

It carries out the reaction Cleavage of a beta-linked Asp residue from the N-terminus of a polypeptide.. Acts in asparagine catabolism but also in the final steps of protein and degradation via hydrolysis of a range of isoaspartyl dipeptides. The affinity for Asn and at least 4 isoaspartyl dipeptides (L-beta-Asp-Ala, L-beta-Asp-Gly, L-beta-Asp-Leu, L-beta-Asp-Phe) is quite low, KM being greater than 4.0 mM. The enzyme is inactive on alpha-aspartyl dipeptides. The protein is Isoaspartyl peptidase/L-asparaginase 1 of Arabidopsis thaliana (Mouse-ear cress).